The following is a 226-amino-acid chain: Phosphoribosylformylglycinamidine synthase subunit PurQ (226 aa).

One can recognise a Glutamine amidotransferase type-1 domain in the interval 2–225 (RFGIVVFPGS…MHYLEGGKNN (224 aa)). Residue cysteine 86 is the Nucleophile of the active site. Catalysis depends on residues histidine 194 and glutamate 196.

As to quaternary structure, part of the FGAM synthase complex composed of 1 PurL, 1 PurQ and 2 PurS subunits.

The protein localises to the cytoplasm. It catalyses the reaction N(2)-formyl-N(1)-(5-phospho-beta-D-ribosyl)glycinamide + L-glutamine + ATP + H2O = 2-formamido-N(1)-(5-O-phospho-beta-D-ribosyl)acetamidine + L-glutamate + ADP + phosphate + H(+). It carries out the reaction L-glutamine + H2O = L-glutamate + NH4(+). The protein operates within purine metabolism; IMP biosynthesis via de novo pathway; 5-amino-1-(5-phospho-D-ribosyl)imidazole from N(2)-formyl-N(1)-(5-phospho-D-ribosyl)glycinamide: step 1/2. Part of the phosphoribosylformylglycinamidine synthase complex involved in the purines biosynthetic pathway. Catalyzes the ATP-dependent conversion of formylglycinamide ribonucleotide (FGAR) and glutamine to yield formylglycinamidine ribonucleotide (FGAM) and glutamate. The FGAM synthase complex is composed of three subunits. PurQ produces an ammonia molecule by converting glutamine to glutamate. PurL transfers the ammonia molecule to FGAR to form FGAM in an ATP-dependent manner. PurS interacts with PurQ and PurL and is thought to assist in the transfer of the ammonia molecule from PurQ to PurL. The sequence is that of Phosphoribosylformylglycinamidine synthase subunit PurQ from Alkaliphilus metalliredigens (strain QYMF).